A 147-amino-acid chain; its full sequence is uncharacterized protein (147 aa).

Transmembrane regions (helical) follow at residues 42–62 (WASL…SPEP) and 64–84 (LILQ…ATAF).

It localises to the cell membrane. This is an uncharacterized protein from Bacillus subtilis (strain 168).